The chain runs to 351 residues: MTQDATPSRIPTLAVTLGDVAGIGPEITAKMLLGHDELRQRARLLVVGDAAVLAQAVQAVGGDPARVRVIATPAEATNQPGSIEVIQAGPSLAHVPPGQLSAEAGDGSVRYVTTACALARDGLIDGIVTAPLNKAAMHMAGHKWPGHTELLAHEFGVKTFSLVLSAGDLYIFHATTHVSLRQAIEDVNPQRMRAVLRLAGSFARALGRADHPVAVAGLNPHAGENGIFGTEDAEILAPAVAQANAEGILAAGPIPADALFPQAVRGKWKFVIACYHDQGHAPFKSVYGDDGVNITVGLPVVRVSVDHGTAFDIAGKGIAREDSLVLAAERAAQLAPGWHQVWETARSTTGG.

Residues His-147 and Thr-148 each contribute to the substrate site. His-177, His-221, and His-276 together coordinate a divalent metal cation. The substrate site is built by Lys-284, Asn-293, and Arg-302.

Belongs to the PdxA family. PdxA2 subfamily. As to quaternary structure, homodimer. Requires a divalent metal cation as cofactor.

It catalyses the reaction 4-O-phospho-D-threonate + NAD(+) = dihydroxyacetone phosphate + CO2 + NADH. Its function is as follows. Catalyzes the NAD-dependent oxidation and subsequent decarboxylation of D-threonate 4-phosphate to produce dihydroxyacetone phosphate (DHAP). Can also use 4-hydroxy-L-threonine 4-phosphate as substrate. This Bordetella bronchiseptica (strain ATCC BAA-588 / NCTC 13252 / RB50) (Alcaligenes bronchisepticus) protein is D-threonate 4-phosphate dehydrogenase.